The chain runs to 246 residues: 1-(5-phosphoribosyl)-5-[(5-phosphoribosylamino)methylideneamino] imidazole-4-carboxamide isomerase (246 aa).

The active-site Proton acceptor is the D7. Catalysis depends on D129, which acts as the Proton donor.

The protein belongs to the HisA/HisF family.

It is found in the cytoplasm. The catalysed reaction is 1-(5-phospho-beta-D-ribosyl)-5-[(5-phospho-beta-D-ribosylamino)methylideneamino]imidazole-4-carboxamide = 5-[(5-phospho-1-deoxy-D-ribulos-1-ylimino)methylamino]-1-(5-phospho-beta-D-ribosyl)imidazole-4-carboxamide. It functions in the pathway amino-acid biosynthesis; L-histidine biosynthesis; L-histidine from 5-phospho-alpha-D-ribose 1-diphosphate: step 4/9. The protein is 1-(5-phosphoribosyl)-5-[(5-phosphoribosylamino)methylideneamino] imidazole-4-carboxamide isomerase of Buchnera aphidicola subsp. Acyrthosiphon pisum (strain Tuc7).